Reading from the N-terminus, the 265-residue chain is MPHLLIIDALNLIRRLHAVQAQQALTPAQALIATRANLINTCRKLLTGSEPTHVIAVFDGEIHSWRKEVYPAYKEGRTPMPVELREGLNTLQDAFWECGVDALLSQTDEADDLIATLASGIAQHGARATIISTDKGFCQLICPQIQIRDYFNKRWLDAAFVEQQYGVVPAQLVDFWALTGISGSNIKGVPGIGPKTATQLLQQYGSLSALLAACQQEEASKPLLKLRQYQDDALLAQRLVRLQRDIPLGFNLREIRYPPAPESEA.

Aspartate 111 is a Mg(2+) binding site. The region spanning 167–260 (VVPAQLVDFW…NLREIRYPPA (94 aa)) is the 5'-3' exonuclease domain. The K(+) site is built by leucine 178, valine 189, and isoleucine 192. Residues 191–196 (GIGPKT) are interaction with DNA.

This sequence belongs to the Xni family. Requires Mg(2+) as cofactor. The cofactor is K(+).

Functionally, has flap endonuclease activity. During DNA replication, flap endonucleases cleave the 5'-overhanging flap structure that is generated by displacement synthesis when DNA polymerase encounters the 5'-end of a downstream Okazaki fragment. This Aeromonas salmonicida (strain A449) protein is Flap endonuclease Xni.